The chain runs to 236 residues: Small ribosomal subunit protein uS2c (236 aa).

The protein belongs to the universal ribosomal protein uS2 family.

Its subcellular location is the plastid. It is found in the chloroplast. This Cucumis sativus (Cucumber) protein is Small ribosomal subunit protein uS2c (rps2).